A 408-amino-acid polypeptide reads, in one-letter code: Glutamate N-acetyltransferase (408 aa).

The substrate site is built by Thr150, Lys176, Thr189, Glu271, Asn403, and Thr408. The Nucleophile role is filled by Thr189.

The protein belongs to the ArgJ family. As to quaternary structure, heterotetramer of two alpha and two beta chains.

Its subcellular location is the cytoplasm. It catalyses the reaction N(2)-acetyl-L-ornithine + L-glutamate = N-acetyl-L-glutamate + L-ornithine. The protein operates within amino-acid biosynthesis; L-arginine biosynthesis; L-ornithine and N-acetyl-L-glutamate from L-glutamate and N(2)-acetyl-L-ornithine (cyclic): step 1/1. Its function is as follows. Catalyzes the transfer of the acetyl group from N(2)-acetylornithine to glutamate, forming N-acetylglutamate and L-ornithine. The sequence is that of Glutamate N-acetyltransferase from Methanococcus maripaludis (strain C5 / ATCC BAA-1333).